Consider the following 236-residue polypeptide: Large ribosomal subunit protein uL1 (236 aa).

This sequence belongs to the universal ribosomal protein uL1 family. As to quaternary structure, part of the 50S ribosomal subunit.

In terms of biological role, binds directly to 23S rRNA. The L1 stalk is quite mobile in the ribosome, and is involved in E site tRNA release. Protein L1 is also a translational repressor protein, it controls the translation of the L11 operon by binding to its mRNA. This is Large ribosomal subunit protein uL1 from Protochlamydia amoebophila (strain UWE25).